Here is a 223-residue protein sequence, read N- to C-terminus: Probable glutathione S-transferase (223 aa).

A GST N-terminal domain is found at 2–81; the sequence is AEVKLLGFWY…YIDETFEGPS (80 aa). Glutathione is bound by residues Ser12, Lys39, Val53, and 65-66; that span reads ES. The 127-residue stretch at 86–212 folds into the GST C-terminal domain; sequence DPYDRALARF…ELLAFFRARF (127 aa).

It belongs to the GST superfamily. HSP26 family. Root tip-specific expression.

The catalysed reaction is RX + glutathione = an S-substituted glutathione + a halide anion + H(+). The sequence is that of Probable glutathione S-transferase from Nicotiana tabacum (Common tobacco).